The following is a 281-amino-acid chain: NADPH-dependent 7-cyano-7-deazaguanine reductase (281 aa).

89 to 91 (VES) contributes to the substrate binding site. 91 to 92 (SK) serves as a coordination point for NADPH. The active-site Thioimide intermediate is the cysteine 188. Aspartate 195 functions as the Proton donor in the catalytic mechanism. 227–228 (HE) is a substrate binding site. 256–257 (RG) lines the NADPH pocket.

It belongs to the GTP cyclohydrolase I family. QueF type 2 subfamily. Homodimer.

It is found in the cytoplasm. It carries out the reaction 7-aminomethyl-7-carbaguanine + 2 NADP(+) = 7-cyano-7-deazaguanine + 2 NADPH + 3 H(+). It functions in the pathway tRNA modification; tRNA-queuosine biosynthesis. Its function is as follows. Catalyzes the NADPH-dependent reduction of 7-cyano-7-deazaguanine (preQ0) to 7-aminomethyl-7-deazaguanine (preQ1). This is NADPH-dependent 7-cyano-7-deazaguanine reductase from Azoarcus sp. (strain BH72).